A 55-amino-acid chain; its full sequence is Trypsin inhibitor ClTI-1 (55 aa).

The 55-residue stretch at 1 to 55 (SIPPACDKYSRLPGCPRDYSPVCGTDGKTYPNECVLCLSNSEENKNVQIYKSGMC) folds into the Kazal-like domain. Disulfide bonds link Cys6–Cys37, Cys15–Cys34, and Cys23–Cys55.

The protein localises to the secreted. Inhibits trypsin and plasmin. This Gallus gallus (Chicken) protein is Trypsin inhibitor ClTI-1.